The chain runs to 189 residues: Tumor protein p53-inducible protein 11 (189 aa).

The Cytoplasmic portion of the chain corresponds to M1–R63. S14 carries the post-translational modification Phosphoserine. Residues V64 to P84 form a helical membrane-spanning segment. The Extracellular portion of the chain corresponds to D85–G108. The chain crosses the membrane as a helical span at residues A109–I129. R130 is a topological domain (cytoplasmic). Residues W131–L151 form a helical membrane-spanning segment. Over A152 to G155 the chain is Extracellular. A helical transmembrane segment spans residues L156–I176. Over Y177–V189 the chain is Cytoplasmic.

It is found in the membrane. This is Tumor protein p53-inducible protein 11 (Tp53i11) from Rattus norvegicus (Rat).